Here is an 868-residue protein sequence, read N- to C-terminus: DNA topoisomerase 1 (868 aa).

The 146-residue stretch at 3–148 (KSLVIVESPA…RFSRVVFNEI (146 aa)) folds into the Toprim domain. Mg(2+) is bound by residues Glu9 and Asp117. Residues 164 to 581 (NMDRVNAQQT…QFFKDFSSQL (418 aa)) enclose the Topo IA-type catalytic domain. The segment at 198 to 203 (SAGRVQ) is interaction with DNA. Tyr325 (O-(5'-phospho-DNA)-tyrosine intermediate) is an active-site residue. C4-type zinc fingers lie at residues 605-636 (CPTC…KERC), 667-694 (CTKC…NPNC), and 716-739 (CDKC…CTNC).

This sequence belongs to the type IA topoisomerase family. As to quaternary structure, monomer. Requires Mg(2+) as cofactor.

It carries out the reaction ATP-independent breakage of single-stranded DNA, followed by passage and rejoining.. Functionally, releases the supercoiling and torsional tension of DNA, which is introduced during the DNA replication and transcription, by transiently cleaving and rejoining one strand of the DNA duplex. Introduces a single-strand break via transesterification at a target site in duplex DNA. The scissile phosphodiester is attacked by the catalytic tyrosine of the enzyme, resulting in the formation of a DNA-(5'-phosphotyrosyl)-enzyme intermediate and the expulsion of a 3'-OH DNA strand. The free DNA strand then undergoes passage around the unbroken strand, thus removing DNA supercoils. Finally, in the religation step, the DNA 3'-OH attacks the covalent intermediate to expel the active-site tyrosine and restore the DNA phosphodiester backbone. The sequence is that of DNA topoisomerase 1 from Haemophilus influenzae (strain ATCC 51907 / DSM 11121 / KW20 / Rd).